We begin with the raw amino-acid sequence, 149 residues long: Nucleoside diphosphate kinase (149 aa).

Residues lysine 9, phenylalanine 57, arginine 85, threonine 91, arginine 102, and asparagine 112 each coordinate ATP. The active-site Pros-phosphohistidine intermediate is the histidine 115.

This sequence belongs to the NDK family. It depends on Mg(2+) as a cofactor.

The protein localises to the cytoplasm. It carries out the reaction a 2'-deoxyribonucleoside 5'-diphosphate + ATP = a 2'-deoxyribonucleoside 5'-triphosphate + ADP. The enzyme catalyses a ribonucleoside 5'-diphosphate + ATP = a ribonucleoside 5'-triphosphate + ADP. Its function is as follows. Major role in the synthesis of nucleoside triphosphates other than ATP. The ATP gamma phosphate is transferred to the NDP beta phosphate via a ping-pong mechanism, using a phosphorylated active-site intermediate. The sequence is that of Nucleoside diphosphate kinase from Methanospirillum hungatei JF-1 (strain ATCC 27890 / DSM 864 / NBRC 100397 / JF-1).